The chain runs to 337 residues: Large ribosomal subunit protein uL3 (337 aa).

The interval 1-20 (MASIHRPKRGSLAFSPRKRA) is disordered.

It belongs to the universal ribosomal protein uL3 family. In terms of assembly, part of the 50S ribosomal subunit. Forms a cluster with proteins L14 and L24e.

In terms of biological role, one of the primary rRNA binding proteins, it binds directly near the 3'-end of the 23S rRNA, where it nucleates assembly of the 50S subunit. This chain is Large ribosomal subunit protein uL3, found in Methanosarcina barkeri (strain Fusaro / DSM 804).